The sequence spans 200 residues: Probable GTP-binding protein EngB (200 aa).

In terms of domain architecture, EngB-type G spans 22–197 (NLPEYAFIGR…LDYIDSINRS (176 aa)). Residues 30–37 (GRSNVGKS), 57–61 (GKTLL), 75–78 (DLPG), 142–145 (TKAD), and 173–178 (HFVSSS) each bind GTP. Mg(2+)-binding residues include Ser-37 and Thr-59.

Belongs to the TRAFAC class TrmE-Era-EngA-EngB-Septin-like GTPase superfamily. EngB GTPase family. Mg(2+) serves as cofactor.

Its function is as follows. Necessary for normal cell division and for the maintenance of normal septation. The protein is Probable GTP-binding protein EngB of Phocaeicola vulgatus (strain ATCC 8482 / DSM 1447 / JCM 5826 / CCUG 4940 / NBRC 14291 / NCTC 11154) (Bacteroides vulgatus).